A 301-amino-acid chain; its full sequence is Large ribosomal subunit protein uL18 (301 aa).

Residues 257-271 (NPERVKSTKKNDKPK) are compositionally biased toward basic and acidic residues. Positions 257–283 (NPERVKSTKKNDKPKRDHKKFYPTKLT) are disordered.

This sequence belongs to the universal ribosomal protein uL18 family. Component of the large ribosomal subunit (LSU).

Its subcellular location is the cytoplasm. The protein resides in the nucleus. Functionally, component of the ribosome, a large ribonucleoprotein complex responsible for the synthesis of proteins in the cell. The small ribosomal subunit (SSU) binds messenger RNAs (mRNAs) and translates the encoded message by selecting cognate aminoacyl-transfer RNA (tRNA) molecules. The large subunit (LSU) contains the ribosomal catalytic site termed the peptidyl transferase center (PTC), which catalyzes the formation of peptide bonds, thereby polymerizing the amino acids delivered by tRNAs into a polypeptide chain. The nascent polypeptides leave the ribosome through a tunnel in the LSU and interact with protein factors that function in enzymatic processing, targeting, and the membrane insertion of nascent chains at the exit of the ribosomal tunnel. The chain is Large ribosomal subunit protein uL18 (RPL5) from Tetrahymena thermophila (strain SB210).